The primary structure comprises 141 residues: Mite group 2 allergen Tyr p 2 (141 aa).

A signal peptide spans 1–15 (MKFLILFALVAVAAA). Cystine bridges form between C23–C132, C36–C41, and C87–C92. N103 carries an N-linked (GlcNAc...) asparagine glycan.

This sequence belongs to the NPC2 family.

The protein resides in the secreted. This is Mite group 2 allergen Tyr p 2 from Tyrophagus putrescentiae (Mold mite).